Reading from the N-terminus, the 188-residue chain is tRNA(Phe) 7-((3-amino-3-carboxypropyl)-4-demethylwyosine(37)-N(4))-methyltransferase (188 aa).

Belongs to the TYW3 family.

The catalysed reaction is 4-demethyl-7-[(3S)-3-amino-3-carboxypropyl]wyosine(37) in tRNA(Phe) + S-adenosyl-L-methionine = 7-[(3S)-3-amino-3-carboxypropyl]wyosine(37) in tRNA(Phe) + S-adenosyl-L-homocysteine + H(+). Functionally, S-adenosyl-L-methionine-dependent methyltransferase that acts as a component of the wyosine derivatives biosynthesis pathway. Probably methylates N-4 position of wybutosine-86 to produce wybutosine-72. The protein is tRNA(Phe) 7-((3-amino-3-carboxypropyl)-4-demethylwyosine(37)-N(4))-methyltransferase of Aeropyrum pernix (strain ATCC 700893 / DSM 11879 / JCM 9820 / NBRC 100138 / K1).